The sequence spans 488 residues: Bifunctional protein HldE (488 aa).

A ribokinase region spans residues 1–332 (MRESFLDTIQ…QELQSQQSAA (332 aa)). An ATP-binding site is contributed by 208–211 (NKRE). Residue aspartate 277 is part of the active site. Residues 359–488 (FTNGCFDLLH…TSNIIRKLAS (130 aa)) form a cytidylyltransferase region.

This sequence in the N-terminal section; belongs to the carbohydrate kinase PfkB family. In the C-terminal section; belongs to the cytidylyltransferase family. As to quaternary structure, homodimer.

The catalysed reaction is D-glycero-beta-D-manno-heptose 7-phosphate + ATP = D-glycero-beta-D-manno-heptose 1,7-bisphosphate + ADP + H(+). It carries out the reaction D-glycero-beta-D-manno-heptose 1-phosphate + ATP + H(+) = ADP-D-glycero-beta-D-manno-heptose + diphosphate. Its pathway is nucleotide-sugar biosynthesis; ADP-L-glycero-beta-D-manno-heptose biosynthesis; ADP-L-glycero-beta-D-manno-heptose from D-glycero-beta-D-manno-heptose 7-phosphate: step 1/4. It participates in nucleotide-sugar biosynthesis; ADP-L-glycero-beta-D-manno-heptose biosynthesis; ADP-L-glycero-beta-D-manno-heptose from D-glycero-beta-D-manno-heptose 7-phosphate: step 3/4. In terms of biological role, catalyzes the phosphorylation of D-glycero-D-manno-heptose 7-phosphate at the C-1 position to selectively form D-glycero-beta-D-manno-heptose-1,7-bisphosphate. Its function is as follows. Catalyzes the ADP transfer from ATP to D-glycero-beta-D-manno-heptose 1-phosphate, yielding ADP-D-glycero-beta-D-manno-heptose. In Methylobacillus flagellatus (strain ATCC 51484 / DSM 6875 / VKM B-1610 / KT), this protein is Bifunctional protein HldE.